Reading from the N-terminus, the 463-residue chain is ATP synthase subunit beta (463 aa).

Gly-152–Thr-159 lines the ATP pocket.

This sequence belongs to the ATPase alpha/beta chains family. As to quaternary structure, F-type ATPases have 2 components, CF(1) - the catalytic core - and CF(0) - the membrane proton channel. CF(1) has five subunits: alpha(3), beta(3), gamma(1), delta(1), epsilon(1). CF(0) has three main subunits: a(1), b(2) and c(9-12). The alpha and beta chains form an alternating ring which encloses part of the gamma chain. CF(1) is attached to CF(0) by a central stalk formed by the gamma and epsilon chains, while a peripheral stalk is formed by the delta and b chains.

It localises to the cell inner membrane. The catalysed reaction is ATP + H2O + 4 H(+)(in) = ADP + phosphate + 5 H(+)(out). Its function is as follows. Produces ATP from ADP in the presence of a proton gradient across the membrane. The catalytic sites are hosted primarily by the beta subunits. The polypeptide is ATP synthase subunit beta (Shewanella baltica (strain OS223)).